Reading from the N-terminus, the 45-residue chain is Lysis protein for colicin E1* (45 aa).

An N-terminal signal peptide occupies residues 1–17 (MRKRFFVGIFAINLLVG). C18 carries the N-palmitoyl cysteine lipid modification. C18 carries the S-diacylglycerol cysteine lipid modification.

Its subcellular location is the cell outer membrane. In terms of biological role, lysis proteins are required for both colicin release and partial cell lysis. This is Lysis protein for colicin E1* (kil) from Shigella sonnei.